The chain runs to 89 residues: uncharacterized protein (89 aa).

A run of 3 helical transmembrane segments spans residues 9-29, 35-55, and 65-85; these read ICNF…LHSI, ISLS…YIYL, and ILFA…FGTS.

The protein resides in the membrane. This is an uncharacterized protein from Schizosaccharomyces pombe (strain 972 / ATCC 24843) (Fission yeast).